The primary structure comprises 299 residues: UBX domain-containing protein 1 (299 aa).

Disordered stretches follow at residues 39-61 (AGVP…SGAP), 127-176 (KAKL…NEDE), and 191-218 (EARK…APPK). Positions 46 to 61 (DAPAQAAPGAADSGAP) are enriched in low complexity. Positions 111–179 (AKVLEIREKI…REKNEDEIAR (69 aa)) form a coiled coil. The span at 128 to 176 (AKLEAEENREKEKKRREDGKAMISHKEAARDREIREAAQDRRREKNEDE) shows a compositional bias: basic and acidic residues. Residues 201–213 (PVPEAKPAPSAAP) are compositionally biased toward low complexity. The UBX domain maps to 218-295 (KDYSTTTLQF…NLVPSANVIL (78 aa)).

In terms of assembly, interacts with cdc-48.1 (via N-terminus) and cdc-48.2 (via N-terminus) in vitro; the interaction with cdc-48.1 is not detected in vivo. In terms of tissue distribution, expressed in the germline (at protein level). Expressed in spermatocytes but not in mature sperm (at protein level). Ubiquitously expressed. Predominantly expressed in the spermatheca.

It is found in the cytoplasm. Its subcellular location is the perinuclear region. In terms of biological role, ubiquitin-binding protein which acts as an adapter for ATPase cdc-48.1 and/or cdc-48.2, conferring substrate specificity. Together with ubxn-2 and ubxn-3, plays a role in hermaphrodite spermatogenesis probably by promoting the degradation of sex determination terminal factor tra-1. In Caenorhabditis elegans, this protein is UBX domain-containing protein 1.